A 204-amino-acid polypeptide reads, in one-letter code: Glutathione S-transferase (204 aa).

Positions 3–80 (PSYKLTYCPV…YLGKQFGLSG (78 aa)) constitute a GST N-terminal domain. Residues tyrosine 9, tryptophan 40, lysine 44, 50–52 (GKT), and 64–65 (QS) contribute to the glutathione site. Positions 82-204 (DDWENLEIDM…WVAKRPPTDL (123 aa)) constitute a GST C-terminal domain.

This sequence belongs to the GST superfamily. Sigma family.

The catalysed reaction is RX + glutathione = an S-substituted glutathione + a halide anion + H(+). The polypeptide is Glutathione S-transferase (Blattella germanica (German cockroach)).